A 508-amino-acid polypeptide reads, in one-letter code: Photosystem II CP47 reaction center protein (508 aa).

The next 6 helical transmembrane spans lie at 21-36 (SVHIMHTALVAGWAGS), 101-115 (IVFSGLCFLAAIWHW), 140-156 (GIHLFLSGVACFGFGAF), 203-218 (IAAGTLGILAGLFHLS), 237-252 (VLSSSIAAVFFAAFVV), and 457-472 (SFALLFFFGHIWHGAR).

It belongs to the PsbB/PsbC family. PsbB subfamily. As to quaternary structure, PSII is composed of 1 copy each of membrane proteins PsbA, PsbB, PsbC, PsbD, PsbE, PsbF, PsbH, PsbI, PsbJ, PsbK, PsbL, PsbM, PsbT, PsbX, PsbY, PsbZ, Psb30/Ycf12, at least 3 peripheral proteins of the oxygen-evolving complex and a large number of cofactors. It forms dimeric complexes. It depends on Binds multiple chlorophylls. PSII binds additional chlorophylls, carotenoids and specific lipids. as a cofactor.

Its subcellular location is the plastid. The protein localises to the chloroplast thylakoid membrane. Functionally, one of the components of the core complex of photosystem II (PSII). It binds chlorophyll and helps catalyze the primary light-induced photochemical processes of PSII. PSII is a light-driven water:plastoquinone oxidoreductase, using light energy to abstract electrons from H(2)O, generating O(2) and a proton gradient subsequently used for ATP formation. This Eucalyptus globulus subsp. globulus (Tasmanian blue gum) protein is Photosystem II CP47 reaction center protein.